We begin with the raw amino-acid sequence, 756 residues long: Serine/threonine-protein kinase DCLK2 (756 aa).

A disordered region spans residues 1 to 44; the sequence is MASTRSIELEHFEERDKRPRPGSRRGAPSSSGGSSISGPKGNGL. Basic and acidic residues predominate over residues 7–19; sequence IELEHFEERDKRP. A compositionally biased stretch (low complexity) spans 24–43; it reads RRGAPSSSGGSSISGPKGNG. Residue Thr-61 is modified to Phosphothreonine. 2 Doublecortin domains span residues 72–158 and 196–279; these read KKAR…VDYT and KLVT…AQDD. 2 stretches are compositionally biased toward low complexity: residues 301-311 and 323-346; these read KYSGSRSPGFS and TPSSQLSTPKSTKSSSSSPTSPGS. The disordered stretch occupies residues 301–375; it reads KYSGSRSPGF…GPELDRCLSP (75 aa). Residues 353-364 show a composition bias toward polar residues; that stretch reads ISAQGRSSSNVN. The residue at position 361 (Ser-361) is a Phosphoserine. A Protein kinase domain is found at 393–650; it reads YRIGKVIGDG…AGEILSHPWV (258 aa). ATP is bound by residues 399–407 and Lys-422; that span reads IGDGNFAVV. The active-site Proton acceptor is Asp-514. Position 646 is a phosphoserine (Ser-646). Thr-665 carries the phosphothreonine modification. The disordered stretch occupies residues 707-756; the sequence is QDSSRPSREQTSPVPPSAQEAPPPLESPRPPGPPATSGCDLAGTWRRHRD. Pro residues predominate over residues 719 to 740; the sequence is PVPPSAQEAPPPLESPRPPGPP.

It belongs to the protein kinase superfamily. CAMK Ser/Thr protein kinase family. CaMK subfamily. As to quaternary structure, binds to and stabilizes microtubules. Interacts with MAPK8IP1/JIP-1, MAPK8IP2/JIP-2, MAPK9/JNK2, PPP1R9B/NEURABIN-2 and actin. In terms of processing, autophosphorylated. As to expression, expressed in the central and peripheral nervous system including the brain, spinal cord, cranial and dorsal root ganglia and in the parasympathetic ganglia. Present in neurons, but not in glial cells, in most forebrain areas. Strong expression in the hippocampal CA1 pyramidal cell layer. Expressed in the photoreceptor sensory cilium complex and in eyes. Also detected in individual cells of the olfactory epithelium.

It is found in the cytoplasm. Its subcellular location is the cytoskeleton. The enzyme catalyses L-seryl-[protein] + ATP = O-phospho-L-seryl-[protein] + ADP + H(+). It carries out the reaction L-threonyl-[protein] + ATP = O-phospho-L-threonyl-[protein] + ADP + H(+). Protein kinase with a significantly reduced Ca(2+)+/CAM affinity and dependence compared to other members of the CaMK family. May play a role in the down-regulation of CRE-dependent gene activation probably by phosphorylation of the CREB coactivator CRTC2/TORC2 and the resulting retention of TORC2 in the cytoplasm. In Mus musculus (Mouse), this protein is Serine/threonine-protein kinase DCLK2 (Dclk2).